Consider the following 461-residue polypeptide: Fumarate hydratase class II (461 aa).

Residues 99–101 (SGT), 130–133 (HPND), 140–142 (STN), and threonine 188 contribute to the substrate site. Histidine 189 (proton donor/acceptor) is an active-site residue. Residue serine 319 is part of the active site. Substrate is bound by residues serine 320 and 325–327 (KVN).

The protein belongs to the class-II fumarase/aspartase family. Fumarase subfamily. As to quaternary structure, homotetramer.

The protein localises to the cytoplasm. It carries out the reaction (S)-malate = fumarate + H2O. The protein operates within carbohydrate metabolism; tricarboxylic acid cycle; (S)-malate from fumarate: step 1/1. In terms of biological role, involved in the TCA cycle. Catalyzes the stereospecific interconversion of fumarate to L-malate. The polypeptide is Fumarate hydratase class II (Prochlorococcus marinus subsp. pastoris (strain CCMP1986 / NIES-2087 / MED4)).